We begin with the raw amino-acid sequence, 450 residues long: Crh-like protein 4 (450 aa).

The N-terminal stretch at 1–21 is a signal peptide; that stretch reads MRLSLVGVAIGLLSSSAIVTA. Cys27 and Cys34 are oxidised to a cystine. A GH16 domain is found at 46–228; that stretch reads YDFTKGSSPD…WAGGETDYSA (183 aa). Residue Glu119 is the Nucleophile of the active site. The Proton donor role is filled by Glu123. Chitin-binding residues include Glu123, Lys201, Trp205, and Thr216. A glycan (N-linked (GlcNAc...) asparagine) is linked at Asn383.

The protein belongs to the glycosyl hydrolase 16 family. CRH1 subfamily. In terms of processing, the GPI-like anchor contains a phosphoceramide lipid group. The anchor position has not been determined.

The protein resides in the cell membrane. The protein localises to the secreted. It is found in the cell wall. It carries out the reaction Random endo-hydrolysis of N-acetyl-beta-D-glucosaminide (1-&gt;4)-beta-linkages in chitin and chitodextrins.. Functionally, dual chitinase/transglycosylase that plays a role in cell wall architecture. Chitinase and transglycosylase activities are coupled. Required for the polysaccharide cross-linking at the septa and the cell wall. More specifically, transfers chitin to 1,6-beta-glucan in the cell wall. The sequence is that of Crh-like protein 4 from Aspergillus fumigatus (strain ATCC MYA-4609 / CBS 101355 / FGSC A1100 / Af293) (Neosartorya fumigata).